Here is a 319-residue protein sequence, read N- to C-terminus: D-alanine--D-alanine ligase B (319 aa).

The ATP-grasp domain maps to 117–312 (KRVWLSLGLP…FQQLVLAILA (196 aa)). Residue 143–198 (AQRLGFPLIVKPAHEGSSIGMAKVGGLDELIAAWREAARYDSQVLVEQWISGPEFT) participates in ATP binding. Mg(2+) contacts are provided by Asp-266, Glu-279, and Asn-281.

It belongs to the D-alanine--D-alanine ligase family. The cofactor is Mg(2+). Requires Mn(2+) as cofactor.

The protein localises to the cytoplasm. It carries out the reaction 2 D-alanine + ATP = D-alanyl-D-alanine + ADP + phosphate + H(+). The protein operates within cell wall biogenesis; peptidoglycan biosynthesis. Cell wall formation. This chain is D-alanine--D-alanine ligase B, found in Pseudomonas aeruginosa (strain ATCC 15692 / DSM 22644 / CIP 104116 / JCM 14847 / LMG 12228 / 1C / PRS 101 / PAO1).